The following is a 135-amino-acid chain: Ribonuclease P protein component (135 aa).

The protein belongs to the RnpA family. Consists of a catalytic RNA component (M1 or rnpB) and a protein subunit.

The enzyme catalyses Endonucleolytic cleavage of RNA, removing 5'-extranucleotides from tRNA precursor.. Functionally, RNaseP catalyzes the removal of the 5'-leader sequence from pre-tRNA to produce the mature 5'-terminus. It can also cleave other RNA substrates such as 4.5S RNA. The protein component plays an auxiliary but essential role in vivo by binding to the 5'-leader sequence and broadening the substrate specificity of the ribozyme. The sequence is that of Ribonuclease P protein component from Saccharophagus degradans (strain 2-40 / ATCC 43961 / DSM 17024).